Here is a 437-residue protein sequence, read N- to C-terminus: Transcription factor E2F1 (437 aa).

Disordered stretches follow at residues 42–87 (ASAP…GRPP) and 101–128 (LAESSGPARGRGRHPGKGVKSPGEKSRY). Residues 67 to 108 (ATPQAPRPTPSAPRPALGRPPVKRRLDLETDHQYLAESSGPA) are cyclin A:CDK2 binding. Residues 89-191 (KRRLDLETDH…KKSKNHIQWL (103 aa)) are interaction with BIRC2/c-IAP1. A DNA-binding region spans residues 110 to 194 (GRGRHPGKGV…KNHIQWLGSH (85 aa)). K117, K120, and K125 each carry N6-acetyllysine. The leucine-zipper stretch occupies residues 153 to 174 (LNWAAEVLKVQKRRIYDITNVL). The short motif at 158–194 (EVLKVQKRRIYDITNVLEGIQLIAKKSKNHIQWLGSH) is the DEF box element. K185 carries the N6-methyllysine; by SETD7 modification. Residues 192–382 (GSHTTVGVGG…RLSPLVAADS (191 aa)) are required for interaction with TRIM28. The interval 195-284 (TTVGVGGRLE…AVDSSENFQI (90 aa)) is dimerization. The disordered stretch occupies residues 300 to 349 (EETVGGISPGKTPSQEVTSEEENRATDSATIVSPPPSSPPSSLTTDPSQS). Over residues 339–349 (PSSLTTDPSQS) the composition is skewed to low complexity. A Phosphoserine; by CHEK2 modification is found at S364. Residues 368–437 (PVDEDRLSPL…DFGDLTPLDF (70 aa)) form a transactivation region. At S375 the chain carries Phosphoserine. Position 403 is a phosphoserine; by GSK3-beta (S403). The RB1 binding stretch occupies residues 409 to 426 (LDYHFGLEEGEGIRDLFD). The residue at position 433 (T433) is a Phosphothreonine; by GSK3-beta.

Belongs to the E2F/DP family. As to quaternary structure, component of the DRTF1/E2F transcription factor complex. Forms heterodimers with DP family members. The E2F1 complex binds specifically hypophosphorylated RB1, the interaction represses E2F1-driven transcription. During the cell cycle, RB1 becomes phosphorylated in mid-to-late G1 phase, detaches from the DRTF1/E2F complex, rendering E2F transcriptionally active. Viral oncoproteins, notably E1A, T-antigen and HPV E7, are capable of sequestering RB1, thus releasing the active complex. Interacts with TRRAP, which probably mediates its interaction with histone acetyltransferase complexes, leading to transcription activation. Binds TOPBP1 and EAPP. Interacts with ARID3A. Interacts with TRIM28; the interaction inhibits E2F1 acetylation through recruiting HDAC1 and represses its transcriptional activity. Interaction with KAT2B; the interaction acetylates E2F1 enhancing its DNA-binding and transcriptional activity. Interacts with BIRC2/c-IAP1 (via BIR domains). The complex TFDP1:E2F1 interacts with CEBPA; the interaction prevents CEBPA binding to target genes promoters and represses its transcriptional activity. Interacts with RRP1B. Interacts with HCFC1. Interacts with KMT2E; the interaction is probably indirect and is mediated via HCFC1. Interacts with DCAF5 and L3MBTL3; the interaction requires methylation at Lys-185 and is necessary to target E2F1 for ubiquitination by the CRL4-DCAF5 E3 ubiquitin ligase complex. (Microbial infection) Interacts with human cytomegalovirus/HHV-5 protein UL123. Post-translationally, phosphorylated by CDK2 and cyclin A-CDK2 in the S-phase. Phosphorylation at Ser-364 by CHEK2 stabilizes E2F1 upon DNA damage and regulates its effect on transcription and apoptosis. Phosphorylation at Ser-403 by GSK3B promotes interaction with USP11, leading to its deubiquitination and stabilization. In terms of processing, ubiquitinated via 'Lys-63'-linked ubiquitin, leading to its degradation. Deubiquitinated by USP11 following phosphorylation by GSK3B, promoting its stability. Acetylation stimulates DNA-binding. Enhanced under stress conditions such as DNA damage and inhibited by retinoblastoma protein RB1. Regulated by KAP1/TRIM28 which recruits HDAC1 to E2F1 resulting in deacetylation. Acetylated by P/CAF/KAT2B. Post-translationally, methylation at Lys-185 by SETD7 promotes E2F1 ubiquitin-dependent proteasomal degradation.

The protein localises to the nucleus. Its activity is regulated as follows. BIRC2/c-IAP1 stimulates its transcriptional activity. Transcription activator that binds DNA cooperatively with DP proteins through the E2 recognition site, 5'-TTTC[CG]CGC-3' found in the promoter region of a number of genes whose products are involved in cell cycle regulation or in DNA replication. The DRTF1/E2F complex functions in the control of cell-cycle progression from G1 to S phase. E2F1 binds preferentially RB1 in a cell-cycle dependent manner. It can mediate both cell proliferation and TP53/p53-dependent apoptosis. Blocks adipocyte differentiation by binding to specific promoters repressing CEBPA binding to its target gene promoters. Directly activates transcription of PEG10. Positively regulates transcription of RRP1B. The sequence is that of Transcription factor E2F1 from Homo sapiens (Human).